The chain runs to 590 residues: Sulfoacetaldehyde acetyltransferase (590 aa).

It belongs to the TPP enzyme family. Requires Mg(2+) as cofactor. It depends on thiamine diphosphate as a cofactor.

Its subcellular location is the cytoplasm. The catalysed reaction is acetyl phosphate + sulfite + H(+) = sulfoacetaldehyde + phosphate. It participates in organosulfur degradation; taurine degradation via aerobic pathway; acetyl phosphate and sulfite from taurine: step 2/2. The sequence is that of Sulfoacetaldehyde acetyltransferase from Rhodobacter capsulatus (strain ATCC BAA-309 / NBRC 16581 / SB1003).